An 89-amino-acid chain; its full sequence is Large ribosomal subunit protein bL27 (89 aa).

A disordered region spans residues 1–22 (MAHTKKGGSSRNGRDSESKRLG).

Belongs to the bacterial ribosomal protein bL27 family.

This Brucella melitensis biotype 1 (strain ATCC 23456 / CCUG 17765 / NCTC 10094 / 16M) protein is Large ribosomal subunit protein bL27.